Consider the following 1678-residue polypeptide: Hispidin synthase (1678 aa).

Residues 33–453 are adenylation (A) domain; it reads GEHRWSYREL…WLGRNTDFIQ (421 aa). Residues 586 to 661 enclose the Carrier 1 domain; sequence DELSNTVKHI…SLSNAVYAKL (76 aa). An O-(pantetheine 4'-phosphoryl)serine modification is found at Ser620. In terms of domain architecture, Ketosynthase family 3 (KS3) spans 683 to 1108; sequence GKEIVVVGQA…GTLGGIVLEA (426 aa). Active-site for beta-ketoacyl synthase activity residues include Cys852, His988, and His1029. A malonyl-CoA:ACP transacylase (MAT) domain region spans residues 1201–1499; it reads YKRGALAFAF…VAWSLLLSNG (299 aa). Residues 1562–1582 are disordered; the sequence is EETLSSGSSTPTLENTDLDSG. Positions 1564–1576 are enriched in polar residues; it reads TLSSGSSTPTLEN. A Carrier 2 domain is found at 1597–1672; sequence DDLRDSIVSS…EMVSNLVEQA (76 aa). At Ser1632 the chain carries O-(pantetheine 4'-phosphoryl)serine.

This sequence in the N-terminal section; belongs to the NRP synthetase family.

It catalyses the reaction (E)-caffeate + 2 malonyl-CoA + ATP + H(+) = hispidin + AMP + 2 CO2 + diphosphate + 2 CoA. It participates in secondary metabolite biosynthesis. PKS-NRPS hybrid synthetase; part of the gene cluster that mediates the fungal bioluminescence cycle. Performs the biosynthesis of hispidin from caffeic acid by two cycles of addition of malonyl units followed by lactonization. The fungal bioluminescence cycle begins with the hispidin synthetase that catalyzes the formation of hispidin which is further hydroxylated by the hispidin-3-hydroxylase, yielding the fungal luciferin 3-hydroxyhispidin. The luciferase then produces an endoperoxide as a high-energy intermediate with decomposition that yields oxyluciferin (also known as caffeoylpyruvate) and light emission. Oxyluciferin can be recycled to caffeic acid by caffeoylpyruvate hydrolase. The polypeptide is Hispidin synthase (Neonothopanus nambi (Agaricus nambi)).